We begin with the raw amino-acid sequence, 261 residues long: Acetylglutamate kinase (261 aa).

Substrate contacts are provided by residues 46–47 (GG), Arg-68, and Asn-160.

It belongs to the acetylglutamate kinase family. ArgB subfamily.

Its subcellular location is the cytoplasm. It catalyses the reaction N-acetyl-L-glutamate + ATP = N-acetyl-L-glutamyl 5-phosphate + ADP. The protein operates within amino-acid biosynthesis; L-arginine biosynthesis; N(2)-acetyl-L-ornithine from L-glutamate: step 2/4. Catalyzes the ATP-dependent phosphorylation of N-acetyl-L-glutamate. This chain is Acetylglutamate kinase, found in Shewanella loihica (strain ATCC BAA-1088 / PV-4).